We begin with the raw amino-acid sequence, 407 residues long: Arrestin domain-containing protein 2 (407 aa).

Belongs to the arrestin family. In terms of assembly, interacts with WWP1 (via WW domains).

The sequence is that of Arrestin domain-containing protein 2 (ARRDC2) from Homo sapiens (Human).